Here is a 382-residue protein sequence, read N- to C-terminus: Pectinesterase (382 aa).

Residues 1 to 16 (MKIIVLLLLAVVLASA) form the signal peptide. C153 and C164 are oxidised to a cystine. N179 carries N-linked (GlcNAc...) asparagine glycosylation. Q193 serves as a coordination point for substrate. The active-site Proton donor is D216. D242 functions as the Nucleophile in the catalytic mechanism. Residues R306 and W308 each contribute to the substrate site. 2 N-linked (GlcNAc...) asparagine glycosylation sites follow: N340 and N376.

Belongs to the pectinesterase family. As to expression, expressed throughout the midgut with particularly strong expression in the ventriculus.

Its subcellular location is the secreted. It carries out the reaction [(1-&gt;4)-alpha-D-galacturonosyl methyl ester](n) + n H2O = [(1-&gt;4)-alpha-D-galacturonosyl](n) + n methanol + n H(+). It participates in glycan metabolism; pectin degradation; 2-dehydro-3-deoxy-D-gluconate from pectin: step 1/5. In terms of biological role, pectinesterase which probably plays an important role in the digestion of plant cell walls. This chain is Pectinesterase, found in Sitophilus oryzae (Rice weevil).